The primary structure comprises 221 residues: uncharacterized protein (221 aa).

2 stretches are compositionally biased toward low complexity: residues 1 to 27 (MNNN…NNNN) and 140 to 162 (TTTS…NSSS). Disordered stretches follow at residues 1-28 (MNNN…NNNE) and 140-205 (TTTS…NIGG).

This is an uncharacterized protein from Dictyostelium discoideum (Social amoeba).